The chain runs to 442 residues: Histidine--tRNA ligase (442 aa).

Residues 416 to 442 form a disordered region; it reads SGDETTVPVEEFPPEGGEELPTYEDYE. A compositionally biased stretch (acidic residues) spans 427–442; the sequence is FPPEGGEELPTYEDYE.

The protein belongs to the class-II aminoacyl-tRNA synthetase family.

Its subcellular location is the cytoplasm. It catalyses the reaction tRNA(His) + L-histidine + ATP = L-histidyl-tRNA(His) + AMP + diphosphate + H(+). In Halorubrum lacusprofundi (strain ATCC 49239 / DSM 5036 / JCM 8891 / ACAM 34), this protein is Histidine--tRNA ligase.